The primary structure comprises 668 residues: UvrABC system protein B (668 aa).

In terms of domain architecture, Helicase ATP-binding spans 31-416 (QGITDGVPAQ…RGHIIEQIIR (386 aa)). An ATP-binding site is contributed by 44–51 (GTTGSGKT). The short motif at 97–120 (YYDYYQPEAYIARSDTYIEKSLLI) is the Beta-hairpin element. The Helicase C-terminal domain maps to 433-596 (QIDDLLEEIR…ITPQPIIKPI (164 aa)). Residues 621-656 (EASIKTYEEAMYQAAQEFQFDEAAKYRDLMNAAKKQ) form the UVR domain.

The protein belongs to the UvrB family. Forms a heterotetramer with UvrA during the search for lesions. Interacts with UvrC in an incision complex.

The protein resides in the cytoplasm. Functionally, the UvrABC repair system catalyzes the recognition and processing of DNA lesions. A damage recognition complex composed of 2 UvrA and 2 UvrB subunits scans DNA for abnormalities. Upon binding of the UvrA(2)B(2) complex to a putative damaged site, the DNA wraps around one UvrB monomer. DNA wrap is dependent on ATP binding by UvrB and probably causes local melting of the DNA helix, facilitating insertion of UvrB beta-hairpin between the DNA strands. Then UvrB probes one DNA strand for the presence of a lesion. If a lesion is found the UvrA subunits dissociate and the UvrB-DNA preincision complex is formed. This complex is subsequently bound by UvrC and the second UvrB is released. If no lesion is found, the DNA wraps around the other UvrB subunit that will check the other stand for damage. The protein is UvrABC system protein B of Chlamydia trachomatis serovar D (strain ATCC VR-885 / DSM 19411 / UW-3/Cx).